A 349-amino-acid polypeptide reads, in one-letter code: tRNA pseudouridine synthase D (349 aa).

Phenylalanine 27 is a binding site for substrate. The active-site Nucleophile is aspartate 80. Asparagine 129 is a substrate binding site. Residues 155 to 303 form the TRUD domain; sequence GVPNYFGAQR…VEAARRAMLL (149 aa). Phenylalanine 329 is a substrate binding site.

The protein belongs to the pseudouridine synthase TruD family.

The catalysed reaction is uridine(13) in tRNA = pseudouridine(13) in tRNA. Its function is as follows. Responsible for synthesis of pseudouridine from uracil-13 in transfer RNAs. The polypeptide is tRNA pseudouridine synthase D (Escherichia coli O45:K1 (strain S88 / ExPEC)).